Reading from the N-terminus, the 183-residue chain is Troponin I, fast skeletal muscle (183 aa).

Residue Ser2 is modified to N-acetylserine. Residues 2–48 are involved in binding TNC; it reads SDEEKKRRAATARRQHLKSAMLQLAVTEIEKEAAAKEVEKQNYLAEH. An involved in binding TNC and actin region spans residues 97–117; it reads SQKLFDLRGKFKRPPLRRVRM.

It belongs to the troponin I family. In terms of assembly, binds to actin and tropomyosin. Post-translationally, the N-terminus is blocked.

Troponin I is the inhibitory subunit of troponin, the thin filament regulatory complex which confers calcium-sensitivity to striated muscle actomyosin ATPase activity. The protein is Troponin I, fast skeletal muscle (TNNI2) of Gallus gallus (Chicken).